The sequence spans 540 residues: GMP synthase [glutamine-hydrolyzing] (540 aa).

The region spanning 26-216 (LIIILDFGSQ…VYHICDCEPT (191 aa)) is the Glutamine amidotransferase type-1 domain. Cysteine 103 acts as the Nucleophile in catalysis. Active-site residues include histidine 190 and glutamate 192. The GMPS ATP-PPase domain maps to 217 to 415 (WTTAAFVEEA…IGLPEEIVQR (199 aa)). Position 244 to 250 (244 to 250 (SGGVDSS)) interacts with ATP.

As to quaternary structure, homodimer.

It catalyses the reaction XMP + L-glutamine + ATP + H2O = GMP + L-glutamate + AMP + diphosphate + 2 H(+). Its pathway is purine metabolism; GMP biosynthesis; GMP from XMP (L-Gln route): step 1/1. Catalyzes the synthesis of GMP from XMP. This is GMP synthase [glutamine-hydrolyzing] from Nostoc punctiforme (strain ATCC 29133 / PCC 73102).